The sequence spans 567 residues: Urease subunit alpha (567 aa).

The Urease domain maps to 129–567 (GGIDAHIHFI…LPLAQRYFLF (439 aa)). Ni(2+)-binding residues include H134, H136, and K217. K217 bears the N6-carboxylysine mark. A substrate-binding site is contributed by H219. The Ni(2+) site is built by H246 and H272. The active-site Proton donor is H320. Residue D360 participates in Ni(2+) binding.

It belongs to the metallo-dependent hydrolases superfamily. Urease alpha subunit family. Heterotrimer of UreA (gamma), UreB (beta) and UreC (alpha) subunits. Three heterotrimers associate to form the active enzyme. Ni cation serves as cofactor. In terms of processing, carboxylation allows a single lysine to coordinate two nickel ions.

The protein localises to the cytoplasm. The catalysed reaction is urea + 2 H2O + H(+) = hydrogencarbonate + 2 NH4(+). It participates in nitrogen metabolism; urea degradation; CO(2) and NH(3) from urea (urease route): step 1/1. In Hahella chejuensis (strain KCTC 2396), this protein is Urease subunit alpha.